We begin with the raw amino-acid sequence, 564 residues long: Eukaryotic translation initiation factor 3 subunit L (564 aa).

S2 is modified (N-acetylserine). S21 is modified (phosphoserine). Positions 331-537 constitute a PCI domain; it reads DAIRVFANIL…IHIADTKVAR (207 aa). K465 and K549 each carry N6-acetyllysine.

The protein belongs to the eIF-3 subunit L family. As to quaternary structure, component of the eukaryotic translation initiation factor 3 (eIF-3) complex, which is composed of 13 subunits: EIF3A, EIF3B, EIF3C, EIF3D, EIF3E, EIF3F, EIF3G, EIF3H, EIF3I, EIF3J, EIF3K, EIF3L and EIF3M. The eIF-3 complex appears to include 3 stable modules: module A is composed of EIF3A, EIF3B, EIF3G and EIF3I; module B is composed of EIF3F, EIF3H, and EIF3M; and module C is composed of EIF3C, EIF3D, EIF3E, EIF3K and EIF3L. EIF3C of module C binds EIF3B of module A and EIF3H of module B, thereby linking the three modules. EIF3J is a labile subunit that binds to the eIF-3 complex via EIF3B. The eIF-3 complex interacts with RPS6KB1 under conditions of nutrient depletion. Mitogenic stimulation leads to binding and activation of a complex composed of MTOR and RPTOR, leading to phosphorylation and release of RPS6KB1 and binding of EIF4B to eIF-3. Interacts with RRN3.

It is found in the cytoplasm. Functionally, component of the eukaryotic translation initiation factor 3 (eIF-3) complex, which is required for several steps in the initiation of protein synthesis. The eIF-3 complex associates with the 40S ribosome and facilitates the recruitment of eIF-1, eIF-1A, eIF-2:GTP:methionyl-tRNAi and eIF-5 to form the 43S pre-initiation complex (43S PIC). The eIF-3 complex stimulates mRNA recruitment to the 43S PIC and scanning of the mRNA for AUG recognition. The eIF-3 complex is also required for disassembly and recycling of post-termination ribosomal complexes and subsequently prevents premature joining of the 40S and 60S ribosomal subunits prior to initiation. The eIF-3 complex specifically targets and initiates translation of a subset of mRNAs involved in cell proliferation, including cell cycling, differentiation and apoptosis, and uses different modes of RNA stem-loop binding to exert either translational activation or repression. This is Eukaryotic translation initiation factor 3 subunit L from Pan troglodytes (Chimpanzee).